The sequence spans 117 residues: Large ribosomal subunit protein bL20 (117 aa).

This sequence belongs to the bacterial ribosomal protein bL20 family.

In terms of biological role, binds directly to 23S ribosomal RNA and is necessary for the in vitro assembly process of the 50S ribosomal subunit. It is not involved in the protein synthesizing functions of that subunit. In Crocosphaera subtropica (strain ATCC 51142 / BH68) (Cyanothece sp. (strain ATCC 51142)), this protein is Large ribosomal subunit protein bL20.